Reading from the N-terminus, the 1369-residue chain is DNA-directed RNA polymerase subunit beta' (1369 aa).

The tract at residues 1–43 is disordered; it reads MTSSSPKTRKSSTKSKAKRGSKSKKAAEIKAVQRLSKTPPPFR. The span at 7–24 shows a compositional bias: basic residues; it reads KTRKSSTKSKAKRGSKSK. Positions 253, 320, 327, and 330 each coordinate Zn(2+). Residues 1294–1369 are disordered; that stretch reads TVDMPSSPVA…LQEEGLLSDE (76 aa). The segment covering 1342 to 1351 has biased composition (acidic residues); sequence DDELSAEDQM. Residues 1357–1369 show a composition bias toward low complexity; it reads LEGLQEEGLLSDE.

It belongs to the RNA polymerase beta' chain family. RpoC2 subfamily. In terms of assembly, in cyanobacteria the RNAP catalytic core is composed of 2 alpha, 1 beta, 1 beta', 1 gamma and 1 omega subunit. When a sigma factor is associated with the core the holoenzyme is formed, which can initiate transcription. Requires Zn(2+) as cofactor.

The enzyme catalyses RNA(n) + a ribonucleoside 5'-triphosphate = RNA(n+1) + diphosphate. DNA-dependent RNA polymerase catalyzes the transcription of DNA into RNA using the four ribonucleoside triphosphates as substrates. The polypeptide is DNA-directed RNA polymerase subunit beta' (Prochlorococcus marinus (strain NATL1A)).